The sequence spans 167 residues: Large ribosomal subunit protein uL23 (167 aa).

Residues 1–118 are large ribosomal subunit protein uL23; sequence MNVNEIIKGP…TEEKAKIAKK (118 aa). 2 disordered regions span residues 91-112 and 136-167; these read FEDE…TEEK and KQAE…NSAN. 2 stretches are compositionally biased toward basic and acidic residues: residues 97-112 and 136-157; these read QDQK…TEEK and KQAE…RIEN. Positions 119–167 are unknown; it reads KAELEAKNKEIAEKLAKKQAELAKKDSETNENQEKRIENQTENQENSAN. Positions 158–167 are enriched in polar residues; that stretch reads QTENQENSAN.

Belongs to the universal ribosomal protein uL23 family. Part of the 50S ribosomal subunit. Contacts protein L29, and trigger factor when it is bound to the ribosome.

Functionally, one of the early assembly proteins it binds 23S rRNA. One of the proteins that surrounds the polypeptide exit tunnel on the outside of the ribosome. Forms the main docking site for trigger factor binding to the ribosome. The chain is Large ribosomal subunit protein uL23 from Mesomycoplasma hyopneumoniae (strain J / ATCC 25934 / NCTC 10110) (Mycoplasma hyopneumoniae).